The following is a 3015-amino-acid chain: Genome polyprotein (3015 aa).

An N-acetylserine; by host modification is found at S2. The interval 2–23 (STLPKPQRKTKRNTNRRPMDVK) is interaction with STAT1. Residues 2-58 (STLPKPQRKTKRNTNRRPMDVKFPGGGQIVGGVYLLPRRGPRLGVRATRKTSERSQP) form an interaction with EIF2AK2/PKR region. Residues 2–59 (STLPKPQRKTKRNTNRRPMDVKFPGGGQIVGGVYLLPRRGPRLGVRATRKTSERSQPR) form an interaction with DDX3X region. Residues 2-75 (STLPKPQRKT…PKARQPIGRS (74 aa)) are disordered. Residues 2-168 (STLPKPQRKT…EDGVNYATGN (167 aa)) are Cytoplasmic-facing. 2 consecutive short sequence motifs (nuclear localization signal) follow at residues 5–13 (PKPQRKTKR) and 38–43 (PRRGPR). A compositionally biased stretch (basic residues) spans 7–16 (PQRKTKRNTN). Residues 32-47 (GGVYLLPRRGPRLGVR) are compositionally biased toward low complexity. S53 carries the post-translational modification Phosphoserine; by host. Short sequence motifs (nuclear localization signal) lie at residues 58-64 (PRGRRQP) and 66-71 (PKARQP). Phosphoserine; by host occurs at positions 99 and 116. The tract at residues 112–152 (PRRRSRNLGKVIDTLTCGLADLMGYIPVLGGPLGGVAAALA) is important for endoplasmic reticulum and mitochondrial localization. Residues 122–173 (VIDTLTCGLADLMGYIPVLGGPLGGVAAALAHGVRAIEDGVNYATGNLPGCS) are interaction with APOA2. The important for lipid droplets localization stretch occupies residues 164 to 167 (YATG). The helical transmembrane segment at 169–189 (LPGCSFSIFLLALLSCLTTPA) threads the bilayer. Residues 178–191 (LLALLSCLTTPASA) constitute a propeptide, ER anchor for the core protein, removed in mature form by host signal peptidase. Residues 190 to 358 (SAIQVRNASG…TGAHWGVLGA (169 aa)) lie on the Lumenal side of the membrane. 4 N-linked (GlcNAc...) asparagine; by host glycosylation sites follow: N196, N209, N234, and N250. The segment at 265–296 (LVGAAAFCSAMYIGDLCGSVFLVGQLFTFRPK) is important for fusion. Residue N305 is glycosylated (N-linked (GlcNAc...) asparagine; by host). Residues 359 to 379 (LLYFSMVANWAKVIAVLFLFA) traverse the membrane as a helical segment. Topologically, residues 380–726 (GADATTYTGS…WEYVVLAFLV (347 aa)) are lumenal. The interval 385–411 (TYTGSAVSSTTGAFVSLFSPGPTQNLQ) is HVR1. N416, N422, and N429 each carry an N-linked (GlcNAc...) (high mannose) asparagine; by host glycan. 4 cysteine pairs are disulfide-bonded: C428/C552, C451/C458, C486/C494, and C503/C508. Residue N447 is glycosylated (N-linked (GlcNAc...) asparagine; by host). The interval 474–478 (VNISG) is HVR2. N-linked (GlcNAc...) asparagine; by host glycosylation occurs at N475. A CD81-binding 1 region spans residues 480-493 (SEDKPYCWHYAPRP). N532 carries N-linked (GlcNAc...) asparagine; by host glycosylation. The CD81-binding 2 stretch occupies residues 544–551 (PPLGAWFG). Residue N556 is glycosylated (N-linked (GlcNAc...) asparagine; by host). 4 disulfide bridges follow: C564-C569, C582-C586, C598-C621, and C608-C645. Residues N624 and N646 are each glycosylated (N-linked (GlcNAc...) (high mannose) asparagine; by host). C653 and C678 are oxidised to a cystine. Residues 661-672 (FEMSPLLFSTTQ) form a PKR/eIF2-alpha phosphorylation homology domain (PePHD) region. A helical membrane pass occupies residues 727–747 (LADARVCACLWLMFLVGQAEA). Residues 748–758 (ALENVIVLNAA) are Lumenal-facing. A helical membrane pass occupies residues 759–779 (SAASCQGLLWGLIFICCAWHV). Residues 780 to 783 (RGRA) are Cytoplasmic-facing. The helical transmembrane segment at 784–804 (VPVTTYALLQLWPLLLLILAL) threads the bilayer. At 805–814 (PRRAYAFDSE) the chain is on the lumenal side. Residues 815–835 (QAASAGLLVLGLITIFTLTPA) traverse the membrane as a helical segment. At 836 to 882 (YKQLLISMLWWIQYFIALTEAQLHQWVPSLLVRGGRDAVILLACLFH) the chain is on the cytoplasmic side. The helical transmembrane segment at 883-903 (PQLGFEVTKILLALLGPLYLL) threads the bilayer. The Lumenal portion of the chain corresponds to 904-929 (QYSLLKTPYFVRAHILLRACMFFRGM). The Peptidase C18 domain maps to 904 to 1027 (QYSLLKTPYF…DVKGKGWRLL (124 aa)). The segment at 905–1207 (YSLLKTPYFV…PVESMQSSQR (303 aa)) is protease NS2-3. A lipid anchor (S-palmitoyl cysteine; by host) is attached at C923. Residues 930–950 (ARGRYAQAILLRIGAWTGTYI) traverse the membrane as a helical segment. The segment at 930-950 (ARGRYAQAILLRIGAWTGTYI) is interaction with host SCPS1. At 951–1658 (YDHLAPLSDW…CMSADLEVIT (708 aa)) the chain is on the cytoplasmic side. Catalysis depends on for protease NS2 activity; shared with dimeric partner residues H953, E973, and C994. In terms of domain architecture, Peptidase S29 spans 1028 to 1209 (APITAYAQQT…ESMQSSQRSP (182 aa)). D1108 (charge relay system; for serine protease NS3 activity) is an active-site residue. C1124 and C1126 together coordinate Zn(2+). Residue S1166 is the Charge relay system; for serine protease NS3 activity of the active site. Residues C1172 and H1176 each coordinate Zn(2+). One can recognise a Helicase ATP-binding domain in the interval 1218–1370 (PAVPQTYQVG…PNITESALPT (153 aa)). 1231-1238 (APTGSGKS) serves as a coordination point for ATP. The Mg(2+) site is built by S1238 and E1318. A DECH box motif is present at residues 1317–1320 (DECH). Residues 1487–1499 (QRRGRTGRGKHGV) are RNA-binding. Residues 1659-1679 (STWVLVGGVVAALAAYCLSVG) form a helical membrane-spanning segment. The tract at residues 1680-1691 (CVVICGRISTSG) is NS3-binding. Topologically, residues 1680-1806 (CVVICGRIST…SLTSPLSTHQ (127 aa)) are cytoplasmic. The chain crosses the membrane as a helical span at residues 1807 to 1827 (TLLLNILGGWVASQLANPTAS). Over 1828 to 1829 (TA) the chain is Lumenal. Residues 1830-1850 (FVVSGLAGAAVGSIGLGRVIV) form a helical membrane-spanning segment. A topological domain (cytoplasmic) is located at residue D1851. The chain crosses the membrane as a helical span at residues 1852–1872 (VLAGYGAGVSGALVAFKIMCG). Residues 1873-1882 (ETPSAEDMVN) lie on the Lumenal side of the membrane. Residues 1883 to 1903 (LLPALLSPGALVVGVVCAAIL) form a helical membrane-spanning segment. Over 1904–1973 (RRHAGPSEGA…WINTDWSTPC (70 aa)) the chain is Cytoplasmic. A lipid anchor (S-palmitoyl cysteine; by host) is attached at C1973. The stretch at 1974 to 2003 (SSSWLRDIWDWVCEVLSDFKTWLKAKLVPA) is an intramembrane region. Topologically, residues 2004–2994 (LPGVPFLSCQ…YHSASRARPR (991 aa)) are cytoplasmic. C2012, C2030, C2032, and C2053 together coordinate Zn(2+). The segment at 2121–2209 (EFFTEVDGVR…ASSSASQLSA (89 aa)) is FKBP8-binding. Residues 2121–2334 (EFFTEVDGVR…PIPPPRRKKV (214 aa)) are transcriptional activation. The interaction with non-structural protein 4A stretch occupies residues 2136-2140 (PRCKP). Residues 2190-2442 (RLARGSPPSL…ALVTPCAAEE (253 aa)) are interaction with host SKP2. S2195, S2198, S2202, S2205, S2208, and S2211 each carry phosphoserine; by host. Residues 2211–2250 (SLKATCTMHGAHPDAELIEANLLWRQEMGGNITRVESENK) are ISDR. The interaction with EIF2AK2/PKR stretch occupies residues 2211-2276 (SLKATCTMHG…REMSVPAECH (66 aa)). Residues 2250-2308 (KVVILDSFDPLVPEFEEREMSVPAECHRPRRPKFPPALPIWATPGYNPPVLETWKSPTY) form an NS4B-binding region. A V3 region spans residues 2301–2378 (ETWKSPTYEP…PDHSTESSEH (78 aa)). Disordered stretches follow at residues 2319 to 2338 (PPSG…VQLD) and 2352 to 2413 (KTFE…SWST). Positions 2324–2327 (PPIP) match the SH3-binding motif. The Nuclear localization signal signature appears at 2329-2337 (PRRKKVVQL). K2352 participates in a covalent cross-link: Glycyl lysine isopeptide (Lys-Gly) (interchain with G-Cter in ubiquitin). Over residues 2355–2365 (ETPSSPTTGYG) the composition is skewed to polar residues. Residues 2368–2383 (QPDHSTESSEHDRDDG) are compositionally biased toward basic and acidic residues. Residues S2453 and S2466 each carry the phosphoserine; by host modification. Residues 2638–2756 (PMGFSYDTRC…VTESAGVNED (119 aa)) form the RdRp catalytic domain. D2644, D2742, and D2743 together coordinate Mg(2+). A helical membrane pass occupies residues 2995–3015 (FLLLCLLLLSVGVGIFLLPAR).

Belongs to the hepacivirus polyprotein family. Homooligomer. Interacts with E1 (via C-terminus). Interacts with the non-structural protein 5A. Interacts (via N-terminus) with host STAT1 (via SH2 domain); this interaction results in decreased STAT1 phosphorylation and ubiquitin-mediated proteasome-dependent STAT1 degradation, leading to decreased IFN-stimulated gene transcription. Interacts with host STAT3; this interaction constitutively activates STAT3. Interacts with host LTBR receptor. Interacts with host TNFRSF1A receptor and possibly induces apoptosis. Interacts with host HNRPK. Interacts with host YWHAE. Interacts with host UBE3A/E6AP. Interacts with host DDX3X. Interacts with host APOA2. Interacts with host RXRA protein. Interacts with host SP110 isoform 3/Sp110b; this interaction sequesters the transcriptional corepressor SP110 away from the nucleus. Interacts with host CREB3 nuclear transcription protein; this interaction triggers cell transformation. Interacts with host ACY3. Interacts with host C1QR1. Interacts with host RBM24; this interaction, which enhances the interaction of the mature core protein with 5'-UTR, may inhibit viral translation and favor replication. Interacts with host EIF2AK2/PKR; this interaction induces the autophosphorylation of EIF2AK2. Part of the viral assembly initiation complex composed of NS2, E1, E2, NS3, NS4A, NS5A and the mature core protein. In terms of assembly, forms a heterodimer with envelope glycoprotein E2. Interacts with mature core protein. Interacts with protease NS2. The heterodimer E1/E2 interacts with host CLDN1; this interaction plays a role in viral entry into host cell. Interacts with host SPSB2 (via C-terminus). Part of the viral assembly initiation complex composed of NS2, E1, E2, NS3, NS4A, NS5A and the mature core protein. Interacts with host NEURL3; this interaction prevents E1 binding to glycoprotein E2. As to quaternary structure, forms a heterodimer with envelope glycoprotein E1. Interacts with host CD81 and SCARB1 receptors; these interactions play a role in viral entry into host cell. Interacts with host EIF2AK2/PKR; this interaction inhibits EIF2AK2 and probably allows the virus to evade the innate immune response. Interacts with host CD209/DC-SIGN and CLEC4M/DC-SIGNR. Interact with host SPCS1; this interaction is essential for viral particle assembly. Interacts with protease NS2. The heterodimer E1/E2 interacts with host CLDN1; this interaction plays a role in viral entry into host cell. Part of the viral assembly initiation complex composed of NS2, E1, E2, NS3, NS4A, NS5A and the mature core protein. Interacts with host SLC3A2/4F2hc; the interaction may facilitate viral entry into host cell. Interacts with human PLSCR1. Homohexamer. Homoheptamer. Interacts with protease NS2. In terms of assembly, homodimer. Interacts with host SPCS1; this interaction is essential for viral particle assembly. Interacts with envelope glycoprotein E1. Interacts with envelope glycoprotein E2. Interacts with viroporin p7. Interacts with serine protease/helicase NS3. Part of the replication complex composed of NS2, NS3, NS4A, NS4B, NS5A and the RNA-directed RNA polymerase embedded in an ER-derived membranous web. Part of the viral assembly initiation complex composed of NS2, E1, E2, NS3, NS4A, NS5A and the mature core protein. As to quaternary structure, interacts with protease NS2. Interacts with non-structural protein 4A; this interaction stabilizes the folding of NS3 serine protease. NS3-NS4A interaction is essential for NS3 activation and allows membrane anchorage of the latter. NS3/NS4A complex also prevents phosphorylation of host IRF3, thus preventing the establishment of dsRNA induced antiviral state. Interacts with host MAVS; this interaction leads to the cleavage and inhibition of host MAVS. Interacts with host TICAM1; this interaction leads to the cleavage and inhibition of host TICAM1. Interacts with host TANK-binding kinase/TBK1; this interaction results in the inhibition of the association between TBK1 and IRF3, which leads to the inhibition of IRF3 activation. Interacts with host RBM24. Part of the replication complex composed of NS2, NS3, NS4A, NS4B, NS5A and the RNA-directed RNA polymerase embedded in an ER-derived membranous web. Part of the viral assembly initiation complex composed of NS2, E1, E2, NS3, NS4A, NS5A and the mature core protein. Interacts with NS3 serine protease; this interaction stabilizes the folding of NS3 serine protease. NS3-NS4A interaction is essential for NS3 activation and allows membrane anchorage of the latter. Interacts with non-structural protein 5A (via N-terminus). Part of the replication complex composed of NS2, NS3, NS4A, NS4B, NS5A and the RNA-directed RNA polymerase embedded in an ER-derived membranous web. Part of the viral assembly initiation complex composed of NS2, E1, E2, NS3, NS4A, NS5A and the mature core protein. In terms of assembly, homomultimer. Interacts with non-structural protein NS5A. Interacts with host PLA2G4C; this interaction likely initiates the recruitment of replication complexes to lipid droplets. Interacts with host STING; this interaction disrupts the interaction between STING and TBK1 thereby suppressing the interferon signaling. Part of the replication complex composed of NS2, NS3, NS4A, NS4B, NS5A and the RNA-directed RNA polymerase embedded in an ER-derived membranous web. As to quaternary structure, monomer. Homodimer; dimerization is required for RNA-binding. Interacts with the mature core protein. Interacts (via N-terminus) with non-structural protein 4A. Interacts with non-structural protein 4B. Interacts (via region D2) with RNA-directed RNA polymerase. Part of the viral assembly initiation complex composed of NS2, E1, E2, NS3, NS4A, NS5A and the mature core protein. Part of the replication complex composed of NS2, NS3, NS4A, NS4B, NS5A and the RNA-directed RNA polymerase embedded in an ER-derived membranous web. Interacts with host GRB2. Interacts with host BIN1. Interacts with host PIK3R1. Interacts with host SRCAP. Interacts with host FKBP8. Interacts (via C-terminus) with host VAPB (via MSP domain). Interacts with host EIF2AK2/PKR; this interaction leads to disruption of EIF2AK2 dimerization by NS5A and probably allows the virus to evade the innate immune response. Interacts (via N-terminus) with host PACSIN2 (via N-terminus); this interaction attenuates protein kinase C alpha-mediated phosphorylation of PACSIN2 by disrupting the interaction between PACSIN2 and PRKCA. Interacts (via N-terminus) with host SRC kinase (via SH2 domain). Interacts with most Src-family kinases. Interacts with host IFI27 and SKP2; promotes the ubiquitin-mediated proteasomal degradation of NS5A. Interacts with host GPS2. Interacts with host TNFRSF21; this interaction allows the modulation by the virus of JNK, p38 MAPK, STAT3, and Akt signaling pathways in a DR6-dependent manner. Interacts (via N-terminus) with host CIDEB (via N-terminus); this interaction seems to regulate the association of HCV particles with APOE. Interacts with host CHKA/Choline Kinase-alpha; CHKA bridges host PI4KA and NS5A and potentiates NS5A-stimulated PI4KA activity, which then facilitates the targeting of the ternary complex to the ER for viral replication. Interacts with host SPSB2 (via C-terminus); this interaction targets NS5A for ubiquitination and degradation. Interacts with host RAB18; this interaction may promote the association of NS5A and other replicase components with lipid droplets. Interacts (via region D2) with host PPIA/CYPA; the interaction stimulates RNA-binding ability of NS5A and is dependent on the peptidyl-prolyl cis-trans isomerase activity of PPIA/CYPA. Interacts with host TRIM14; this interaction induces the degradation of NS5A. Homooligomer. Interacts with non-structural protein 5A. Interacts with host VAPB. Interacts with host PRK2/PKN2. Interacts with host HNRNPA1 and SEPT6; these interactions facilitate viral replication. Part of the replication complex composed of NS2, NS3, NS4A, NS4B, NS5A and the RNA-directed RNA polymerase. It depends on Zn(2+) as a cofactor. Mg(2+) serves as cofactor. Post-translationally, specific enzymatic cleavages in vivo yield mature proteins. The structural proteins, core, E1, E2 and p7 are produced by proteolytic processing by host signal peptidases. The core protein precursor is synthesized as a 23 kDa, which is retained in the ER membrane through the hydrophobic signal peptide. Cleavage by the signal peptidase releases the 21 kDa mature core protein. The cleavage of the core protein precursor occurs between aminoacids 176 and 188 but the exact cleavage site is not known. Some degraded forms of the core protein appear as well during the course of infection. The other proteins (p7, NS2, NS3, NS4A, NS4B, NS5A and NS5B) are cleaved by the viral proteases. Autoprocessing between NS2 and NS3 is mediated by the NS2 cysteine protease catalytic domain and regulated by the NS3 N-terminal domain. In terms of processing, phosphorylated by host PKC and PKA. Ubiquitinated; mediated by UBE3A and leading to core protein subsequent proteasomal degradation. Post-translationally, highly N-glycosylated. In terms of processing, palmitoylation is required for NS2/3 autoprocessing and E2 recruitment to membranes. Palmitoylated. This modification may play a role in its polymerization or in protein-protein interactions. Post-translationally, phosphorylated on serines in a basal form termed p56. p58 is a hyperphosphorylated form of p56. p56 and p58 coexist in the cell in roughly equivalent amounts. Hyperphosphorylation is dependent on the presence of NS4A. Host CSNK1A1/CKI-alpha or RPS6KB1 kinases may be responsible for NS5A phosphorylation. In terms of processing, tyrosine phosphorylation is essential for the interaction with host SRC. Ubiquitinated. Ubiquitination, most probably at Lys-2352, mediated by host IFI27 and SKP2 leads to proteasomal degradation, restricting viral infection. Ubiquitination by host TRIM22 leads to interruption of viral replication. Post-translationally, the N-terminus is phosphorylated by host PRK2/PKN2.

It is found in the host endoplasmic reticulum membrane. The protein resides in the host mitochondrion membrane. Its subcellular location is the virion. The protein localises to the host cytoplasm. It localises to the host nucleus. It is found in the host lipid droplet. The protein resides in the virion membrane. Its subcellular location is the host mitochondrion. The protein localises to the host cell membrane. It localises to the host perinuclear region. It catalyses the reaction Hydrolysis of four peptide bonds in the viral precursor polyprotein, commonly with Asp or Glu in the P6 position, Cys or Thr in P1 and Ser or Ala in P1'.. It carries out the reaction a ribonucleoside 5'-triphosphate + H2O = a ribonucleoside 5'-diphosphate + phosphate + H(+). The enzyme catalyses ATP + H2O = ADP + phosphate + H(+). The catalysed reaction is RNA(n) + a ribonucleoside 5'-triphosphate = RNA(n+1) + diphosphate. Inhibited by the antiviral drug hexamethylene amiloride. Inhibition by amantadine appears to be genotype-dependent. Also inhibited by long-alkyl-chain iminosugar derivatives. With respect to regulation, activity is up-regulated by PRK2/PKN2-mediated phosphorylation. Its function is as follows. Packages viral RNA to form a viral nucleocapsid, and promotes virion budding. Participates in the viral particle production as a result of its interaction with the non-structural protein 5A. Binds RNA and may function as a RNA chaperone to induce the RNA structural rearrangements taking place during virus replication. Modulates viral translation initiation by interacting with viral IRES and 40S ribosomal subunit. Affects various cell signaling pathways, host immunity and lipid metabolism. Prevents the establishment of cellular antiviral state by blocking the interferon-alpha/beta (IFN-alpha/beta) and IFN-gamma signaling pathways and by blocking the formation of phosphorylated STAT1 and promoting ubiquitin-mediated proteasome-dependent degradation of STAT1. Activates STAT3 leading to cellular transformation. Regulates the activity of cellular genes, including c-myc and c-fos. May repress the promoter of p53, and sequester CREB3 and SP110 isoform 3/Sp110b in the cytoplasm. Represses cell cycle negative regulating factor CDKN1A, thereby interrupting an important check point of normal cell cycle regulation. Targets transcription factors involved in the regulation of inflammatory responses and in the immune response: suppresses TNF-induced NF-kappa-B activation, and activates AP-1. Binds to dendritic cells (DCs) via C1QR1, resulting in down-regulation of T-lymphocytes proliferation. Alters lipid metabolism by interacting with hepatocellular proteins involved in lipid accumulation and storage. Induces up-regulation of FAS promoter activity, and thereby contributes to the increased triglyceride accumulation in hepatocytes (steatosis). Functionally, forms a heterodimer with envelope glycoprotein E2, which mediates virus attachment to the host cell, virion internalization through clathrin-dependent endocytosis and fusion with host membrane. Fusion with the host cell is most likely mediated by both E1 and E2, through conformational rearrangements of the heterodimer required for fusion rather than a classical class II fusion mechanism. E1/E2 heterodimer binds host apolipoproteins such as APOB and ApoE thereby forming a lipo-viro-particle (LVP). APOE associated to the LVP allows the initial virus attachment to cell surface receptors such as the heparan sulfate proteoglycans (HSPGs), syndecan-1 (SDC1), syndecan-1 (SDC2), the low-density lipoprotein receptor (LDLR) and scavenger receptor class B type I (SCARB1). The cholesterol transfer activity of SCARB1 allows E2 exposure and binding of E2 to SCARB1 and the tetraspanin CD81. E1/E2 heterodimer binding on CD81 activates the epithelial growth factor receptor (EGFR) signaling pathway. Diffusion of the complex E1-E2-EGFR-SCARB1-CD81 to the cell lateral membrane allows further interaction with Claudin 1 (CLDN1) and occludin (OCLN) to finally trigger HCV entry. Forms a heterodimer with envelope glycoprotein E1, which mediates virus attachment to the host cell, virion internalization through clathrin-dependent endocytosis and fusion with host membrane. Fusion with the host cell is most likely mediated by both E1 and E2, through conformational rearrangements of the heterodimer required for fusion rather than a classical class II fusion mechanism. The interaction between envelope glycoprotein E2 and host apolipoprotein E/APOE allows the proper assembly, maturation and infectivity of the viral particles. This interaction is probably promoted via the up-regulation of cellular autophagy by the virus. E1/E2 heterodimer binds host apolipoproteins such as APOB and APOE thereby forming a lipo-viro-particle (LVP). APOE associated to the LVP allows the initial virus attachment to cell surface receptors such as the heparan sulfate proteoglycans (HSPGs), syndecan-1 (SDC1), syndecan-1 (SDC2), the low-density lipoprotein receptor (LDLR) and scavenger receptor class B type I (SCARB1). The cholesterol transfer activity of SCARB1 allows E2 exposure and binding of E2 to SCARB1 and the tetraspanin CD81. E1/E2 heterodimer binding on CD81 activates the epithelial growth factor receptor (EGFR) signaling pathway. Diffusion of the complex E1-E2-EGFR-SCARB1-CD81 to the cell lateral membrane allows further interaction with Claudin 1 (CLDN1) and occludin (OCLN) to finally trigger HCV entry. Inhibits host EIF2AK2/PKR activation, preventing the establishment of an antiviral state. Viral ligand for CD209/DC-SIGN and CLEC4M/DC-SIGNR, which are respectively found on dendritic cells (DCs), and on liver sinusoidal endothelial cells and macrophage-like cells of lymph node sinuses. These interactions allow the capture of circulating HCV particles by these cells and subsequent facilitated transmission to permissive cells such as hepatocytes and lymphocyte subpopulations. The interaction between E2 and host amino acid transporter complex formed by SLC3A2 and SLC7A5/LAT1 may facilitate viral entry into host cell. In terms of biological role, ion channel protein that acts as a viroporin and plays an essential role in the assembly, envelopment and secretion of viral particles. Regulates the host cell secretory pathway, which induces the intracellular retention of viral glycoproteins and favors assembly of viral particles. Creates a pore in acidic organelles and releases Ca(2+) and H(+) in the cytoplasm of infected cells, leading to a productive viral infection. High levels of cytoplasmic Ca(2+) may trigger membrane trafficking and transport of viral ER-associated proteins to viroplasms, sites of viral genome replication. This ionic imbalance induces the assembly of the inflammasome complex, which triggers the maturation of pro-IL-1beta into IL-1beta through the action of caspase-1. Targets also host mitochondria and induces mitochondrial depolarization. In addition of its role as a viroporin, acts as a lipid raft adhesion factor. Its function is as follows. Cysteine protease required for the proteolytic auto-cleavage between the non-structural proteins NS2 and NS3. The N-terminus of NS3 is required for the function of NS2 protease (active region NS2-3). Promotes the initiation of viral particle assembly by mediating the interaction between structural and non-structural proteins. Functionally, displays three enzymatic activities: serine protease with a chymotrypsin-like fold, NTPase and RNA helicase. NS3 serine protease, in association with NS4A, is responsible for the cleavages of NS3-NS4A, NS4A-NS4B, NS4B-NS5A and NS5A-NS5B. The NS3/NS4A complex prevents phosphorylation of host IRF3, thus preventing the establishment of dsRNA induced antiviral state. The NS3/NS4A complex induces host amino acid transporter component SLC3A2, thus contributing to HCV propagation. NS3 RNA helicase binds to RNA and unwinds both dsDNA and dsRNA in the 3' to 5' direction, and likely resolves RNA complicated stable secondary structures in the template strand. Binds a single ATP and catalyzes the unzipping of a single base pair of dsRNA. Inhibits host antiviral proteins TBK1 and IRF3 thereby preventing the establishment of an antiviral state. Cleaves host MAVS/CARDIF thereby preventing the establishment of an antiviral state. Cleaves host TICAM1/TRIF, thereby disrupting TLR3 signaling and preventing the establishment of an antiviral state. Peptide cofactor which forms a non-covalent complex with the N-terminal of NS3 serine protease. The NS3/NS4A complex prevents phosphorylation of host IRF3, thus preventing the establishment of dsRNA induced antiviral state. The NS3/NS4A complex induces host amino acid transporter component SLC3A2, thus contributing to HCV propagation. In terms of biological role, induces a specific membrane alteration that serves as a scaffold for the virus replication complex. This membrane alteration gives rise to the so-called ER-derived membranous web that contains the replication complex. NS4B self-interaction contributes to its function in membranous web formation. Promotes host TRIF protein degradation in a CASP8-dependent manner thereby inhibiting host TLR3-mediated interferon signaling. Disrupts the interaction between STING and TBK1 contributing to the inhibition of interferon signaling. Its function is as follows. Phosphorylated protein that is indispensable for viral replication and assembly. Both hypo- and hyperphosphorylated states are required for the viral life cycle. The hyperphosphorylated form of NS5A is an inhibitor of viral replication. Involved in RNA-binding and especially in binding to the viral genome. Zinc is essential for RNA-binding. Participates in the viral particle production as a result of its interaction with the mature viral core protein. Its interaction with host VAPB may target the viral replication complex to vesicles. Down-regulates viral IRES translation initiation. Mediates interferon resistance, presumably by interacting with and inhibiting host EIF2AK2/PKR. Prevents BIN1-induced apoptosis. Acts as a transcriptional activator of some host genes important for viral replication when localized in the nucleus. Via the interaction with host PACSIN2, modulates lipid droplet formation in order to promote virion assembly. Modulates TNFRSF21/DR6 signaling pathway for viral propagation. Functionally, RNA-dependent RNA polymerase that performs primer-template recognition and RNA synthesis during viral replication. Initiates RNA transcription/replication at a flavin adenine dinucleotide (FAD), resulting in a 5'- FAD cap on viral RNAs. In this way, recognition of viral 5' RNA by host pattern recognition receptors can be bypassed, thereby evading activation of antiviral pathways. This chain is Genome polyprotein, found in Hepatitis C virus genotype 6h (isolate VN004) (HCV).